The sequence spans 99 residues: Protein NCBP2AS2 (99 aa).

A disordered region spans residues 76–99 (ELRRGLRGRSGPPPGSQRGPGANI).

This is Protein NCBP2AS2 from Homo sapiens (Human).